The primary structure comprises 208 residues: Outer-membrane lipoprotein carrier protein (208 aa).

The signal sequence occupies residues 1 to 22; sequence MLKPLSQLVCALPLVVAASSYA.

It belongs to the LolA family. In terms of assembly, monomer.

Its subcellular location is the periplasm. Participates in the translocation of lipoproteins from the inner membrane to the outer membrane. Only forms a complex with a lipoprotein if the residue after the N-terminal Cys is not an aspartate (The Asp acts as a targeting signal to indicate that the lipoprotein should stay in the inner membrane). This chain is Outer-membrane lipoprotein carrier protein, found in Shewanella loihica (strain ATCC BAA-1088 / PV-4).